A 224-amino-acid chain; its full sequence is Protein YiiM (224 aa).

Positions 26–163 (IQVDGELMLT…VSADAPLELV (138 aa)) constitute an MOSC domain.

As to quaternary structure, monomer.

The sequence is that of Protein YiiM (yiiM) from Escherichia coli (strain K12).